Reading from the N-terminus, the 520-residue chain is RNA-binding protein MEX3A (520 aa).

Positions 49–111 (GLGEPPAPTA…QPPTAPKGAS (63 aa)) are disordered. Residues 60-69 (EDGGGGGGGA) show a composition bias toward gly residues. Positions 73–91 (PAAPPQPAPPPPPAAPPAA) are enriched in pro residues. KH domains are found at residues 132-193 (TTEC…RREI) and 223-284 (QVTI…REEI). Phosphoserine is present on S338. Positions 412–461 (SSSSAKARAGPPGAHRSPATSAGPELAGLPRRPPGEPLQGFSKLGGGGLR) are disordered. S462 carries the phosphoserine modification. The segment at 469 to 509 (CMVCFESEVTAALVPCGHNLFCMECAVRICERTDPECPVCH) adopts an RING-type zinc-finger fold.

In terms of processing, phosphorylated. As to expression, highest levels found in fetal brain and testis. Detected also in thymus, salivary gland and uterus.

Its subcellular location is the cytoplasm. The protein resides in the nucleus. It is found in the P-body. RNA binding protein, may be involved in post-transcriptional regulatory mechanisms. The protein is RNA-binding protein MEX3A (MEX3A) of Homo sapiens (Human).